We begin with the raw amino-acid sequence, 435 residues long: Tyrosine-protein phosphatase non-receptor type 1 (435 aa).

At Met1 the chain carries N-acetylmethionine. The Tyrosine-protein phosphatase domain occupies Met3–Gly277. The residue at position 20 (Tyr20) is a Phosphotyrosine. At Ser50 the chain carries Phosphoserine; by PKB/AKT1, CLK1 and CLK2. Position 66 is a phosphotyrosine; by EGFR (Tyr66). Residues Asp181 and Cys215–Arg221 contribute to the substrate site. Catalysis depends on Cys215, which acts as the Phosphocysteine intermediate. Cys215 carries the cysteine persulfide; alternate modification. Cys215 is modified (cysteine sulfenic acid (-SOH); alternate). Cys215 carries the cysteine sulfinic acid (-SO2H); alternate modification. Cys215 is modified (S-nitrosocysteine; in reversibly inhibited form). Positions Cys215–Ser216 form a cross-link, n,N-(cysteine-1,S-diyl)serine (Cys-Ser); in inhibited form. A phosphoserine; by CLK1 and CLK2 mark is found at Ser242 and Ser243. Gln262 is a substrate binding site. Residues Thr338 to Gly351 show a composition bias toward basic and acidic residues. Residues Thr338–Tyr359 are disordered. A phosphoserine mark is found at Ser352, Ser363, and Ser365. Phosphothreonine is present on Thr368. Ser378 is subject to Phosphoserine; by PKC. The interval Ser378–Asp398 is disordered. Ser386 carries the phosphoserine; by CDK1 modification.

The protein belongs to the protein-tyrosine phosphatase family. Non-receptor class 1 subfamily. As to quaternary structure, interacts with EPHA3 (phosphorylated); dephosphorylates EPHA3 and may regulate its trafficking and function. Interacts with MET. Interacts with NCK1. Post-translationally, oxidized on Cys-215; the Cys-SOH formed in response to redox signaling reacts with the alpha-amido of the following residue to form a sulfenamide cross-link, triggering a conformational change that inhibits substrate binding and activity. The active site can be restored by reduction. In terms of processing, ser-50 is the major site of phosphorylation as compared to Ser-242 and Ser-243. Activated by phosphorylation at Ser-50. S-nitrosylation of Cys-215 inactivates the enzyme activity. Post-translationally, sulfhydration at Cys-215 following endoplasmic reticulum stress inactivates the enzyme activity, promoting EIF2AK3/PERK activity. As to expression, expressed in keratinocytes (at protein level).

It localises to the endoplasmic reticulum membrane. It catalyses the reaction O-phospho-L-tyrosyl-[protein] + H2O = L-tyrosyl-[protein] + phosphate. Its function is as follows. Tyrosine-protein phosphatase which acts as a regulator of endoplasmic reticulum unfolded protein response. Mediates dephosphorylation of EIF2AK3/PERK; inactivating the protein kinase activity of EIF2AK3/PERK. May play an important role in CKII- and p60c-src-induced signal transduction cascades. May regulate the EFNA5-EPHA3 signaling pathway which modulates cell reorganization and cell-cell repulsion. May also regulate the hepatocyte growth factor receptor signaling pathway through dephosphorylation of MET. The sequence is that of Tyrosine-protein phosphatase non-receptor type 1 (PTPN1) from Homo sapiens (Human).